A 487-amino-acid chain; its full sequence is Keratin, type I cytoskeletal 12 (487 aa).

Positions 1 to 118 (MSLSVCTSAL…GNDGGLLSGS (118 aa)) are head. The tract at residues 119–154 (EKETMQNLNDRLASYLGKVRSLEEANAELENKIREW) is coil 1A. Residues 119 to 433 (EKETMQNLND…RLLEGDSQGD (315 aa)) form the IF rod domain. The linker 1 stretch occupies residues 158 to 175 (RRTRDAGSQSDYSKYYPL). Positions 176 to 267 (IEDLKNKIVS…KNHEEELQSF (92 aa)) are coil 1B. The tract at residues 268–290 (QAGGPGEVNVEMDAAPGVDLTKV) is linker 12. The tract at residues 291–428 (LNEMRAQYEA…IETYRRLLEG (138 aa)) is coil 2. The segment at 428-461 (GDSQGDGFDESSSLSVSKPQTPSVDSSKDPNKTR) is disordered. The tail stretch occupies residues 429 to 487 (DSQGDGFDESSSLSVSKPQTPSVDSSKDPNKTRKIKTVVQEIVNGEVVSSQVQELEEEM). Over residues 437–452 (ESSSLSVSKPQTPSVD) the composition is skewed to polar residues.

Belongs to the intermediate filament family. Heterotetramer of two type I and two type II keratins. Keratin-3 associates with keratin-12. As to expression, expressed in the corneal epithelium (at protein level). Also expressed in the suprabasal limbal epithelium of the cornea (at protein level).

Its function is as follows. Involved in corneal epithelium organization, integrity and corneal keratin expression. This chain is Keratin, type I cytoskeletal 12 (Krt12), found in Mus musculus (Mouse).